A 36-amino-acid chain; its full sequence is Photosystem II reaction center protein Y (36 aa).

Over 1 to 4 (MDSR) the chain is Lumenal. A helical transmembrane segment spans residues 5 to 23 (LLIVLIPVLAAASWAVYNI). At 24 to 36 (GRVALQQFRKMTS) the chain is on the stromal side.

The protein belongs to the PsbY family. In terms of assembly, PSII is composed of 1 copy each of membrane proteins PsbA, PsbB, PsbC, PsbD, PsbE, PsbF, PsbH, PsbI, PsbJ, PsbK, PsbL, PsbM, PsbT, PsbX, PsbY, PsbZ, Psb30/Ycf12, at least 3 peripheral proteins of the oxygen-evolving complex and a large number of cofactors. It forms dimeric complexes.

It localises to the plastid. It is found in the chloroplast thylakoid membrane. Functionally, loosely associated component of the core of photosystem II (PSII), it is not always seen in crystals. PSII is a light-driven water plastoquinone oxidoreductase, using light energy to abstract electrons from H(2)O, generating a proton gradient subsequently used for ATP formation. This Porphyra purpurea (Red seaweed) protein is Photosystem II reaction center protein Y.